Consider the following 342-residue polypeptide: Ferredoxin--NADP reductase (342 aa).

FAD-binding residues include cysteine 17, aspartate 36, glutamine 44, tyrosine 49, valine 89, phenylalanine 124, aspartate 289, and threonine 330.

The protein belongs to the ferredoxin--NADP reductase type 2 family. As to quaternary structure, homodimer. FAD is required as a cofactor.

It catalyses the reaction 2 reduced [2Fe-2S]-[ferredoxin] + NADP(+) + H(+) = 2 oxidized [2Fe-2S]-[ferredoxin] + NADPH. This chain is Ferredoxin--NADP reductase, found in Rhodopseudomonas palustris (strain ATCC BAA-98 / CGA009).